Reading from the N-terminus, the 545-residue chain is Probable bifunctional tRNA threonylcarbamoyladenosine biosynthesis protein (545 aa).

Residues 1-329 (MKNTFILGIE…YRTDDVKVTW (329 aa)) are kae1. Fe cation-binding residues include histidine 113, histidine 117, and tyrosine 134. L-threonylcarbamoyladenylate-binding positions include 134–138 (YVSGA), aspartate 166, glycine 179, glutamate 183, and asparagine 262. Aspartate 290 lines the Fe cation pocket. Residues 340 to 545 (EISPGTSLKL…EEIKKRARYA (206 aa)) enclose the Protein kinase domain. Residues 353–361 (LDNGAEAIV) and lysine 375 contribute to the ATP site. The Proton acceptor; for kinase activity role is filled by aspartate 462.

The protein in the N-terminal section; belongs to the KAE1 / TsaD family. It in the C-terminal section; belongs to the protein kinase superfamily. Tyr protein kinase family. BUD32 subfamily. As to quaternary structure, component of the KEOPS complex that consists of Kae1, Bud32, Cgi121 and Pcc1; the whole complex dimerizes. Fe(2+) is required as a cofactor.

It is found in the cytoplasm. It catalyses the reaction L-seryl-[protein] + ATP = O-phospho-L-seryl-[protein] + ADP + H(+). The enzyme catalyses L-threonyl-[protein] + ATP = O-phospho-L-threonyl-[protein] + ADP + H(+). It carries out the reaction L-threonylcarbamoyladenylate + adenosine(37) in tRNA = N(6)-L-threonylcarbamoyladenosine(37) in tRNA + AMP + H(+). Required for the formation of a threonylcarbamoyl group on adenosine at position 37 (t(6)A37) in tRNAs that read codons beginning with adenine. Is a component of the KEOPS complex that is probably involved in the transfer of the threonylcarbamoyl moiety of threonylcarbamoyl-AMP (TC-AMP) to the N6 group of A37. The Kae1 domain likely plays a direct catalytic role in this reaction. The Bud32 domain probably displays kinase activity that regulates Kae1 function. The chain is Probable bifunctional tRNA threonylcarbamoyladenosine biosynthesis protein from Methanosarcina barkeri (strain Fusaro / DSM 804).